A 431-amino-acid polypeptide reads, in one-letter code: Levansucrase Lscbeta (431 aa).

Positions 61, 62, 148, 218, and 219 each coordinate sucrose. Residue D62 is the Nucleophile of the active site. Catalysis depends on E303, which acts as the Proton donor/acceptor.

This sequence belongs to the glycosyl hydrolase 68 family. Homodimer.

It catalyses the reaction [6)-beta-D-fructofuranosyl-(2-&gt;](n) alpha-D-glucopyranoside + sucrose = [6)-beta-D-fructofuranosyl-(2-&gt;](n+1) alpha-D-glucopyranoside + D-glucose. With respect to regulation, sucrose hydrolase activity is negatively affected by salt concentration. The levan polymerization rate is constant regardless of sucrose concentration. Catalyzes the synthesis of levan, a fructose polymer, by transferring the fructosyl moiety from sucrose to a growing acceptor molecule. Also displays sucrose hydrolase activity. This chain is Levansucrase Lscbeta, found in Pseudomonas syringae pv. actinidiae.